Here is a 453-residue protein sequence, read N- to C-terminus: Pup--protein ligase (453 aa).

E9 contributes to the Mg(2+) binding site. Residue R53 participates in ATP binding. Mg(2+) is bound at residue Y55. The active-site Proton acceptor is the D57. E63 is a binding site for Mg(2+). Residues T66 and W420 each contribute to the ATP site.

This sequence belongs to the Pup ligase/Pup deamidase family. Pup-conjugating enzyme subfamily.

It catalyses the reaction ATP + [prokaryotic ubiquitin-like protein]-L-glutamate + [protein]-L-lysine = ADP + phosphate + N(6)-([prokaryotic ubiquitin-like protein]-gamma-L-glutamyl)-[protein]-L-lysine.. The protein operates within protein degradation; proteasomal Pup-dependent pathway. It functions in the pathway protein modification; protein pupylation. Its function is as follows. Catalyzes the covalent attachment of the prokaryotic ubiquitin-like protein modifier Pup to the proteasomal substrate proteins, thereby targeting them for proteasomal degradation. This tagging system is termed pupylation. The ligation reaction involves the side-chain carboxylate of the C-terminal glutamate of Pup and the side-chain amino group of a substrate lysine. This Streptomyces coelicolor (strain ATCC BAA-471 / A3(2) / M145) protein is Pup--protein ligase.